Reading from the N-terminus, the 172-residue chain is Inorganic pyrophosphatase (172 aa).

Positions 26, 40, and 52 each coordinate substrate. Residues aspartate 62, aspartate 67, and aspartate 99 each coordinate Mg(2+). Substrate is bound at residue tyrosine 138.

The protein belongs to the PPase family. In terms of assembly, homohexamer. Requires Mg(2+) as cofactor.

The protein localises to the cytoplasm. The enzyme catalyses diphosphate + H2O = 2 phosphate + H(+). Functionally, catalyzes the hydrolysis of inorganic pyrophosphate (PPi) forming two phosphate ions. This Saccharolobus solfataricus (strain ATCC 35092 / DSM 1617 / JCM 11322 / P2) (Sulfolobus solfataricus) protein is Inorganic pyrophosphatase.